The chain runs to 110 residues: Phosphoribosyl-AMP cyclohydrolase (110 aa).

A Mg(2+)-binding site is contributed by Asp80. Residue Cys81 participates in Zn(2+) binding. The Mg(2+) site is built by Asp82 and Asp84. Zn(2+) contacts are provided by Cys97 and Cys104.

This sequence belongs to the PRA-CH family. As to quaternary structure, homodimer. The cofactor is Mg(2+). It depends on Zn(2+) as a cofactor.

The protein resides in the cytoplasm. The catalysed reaction is 1-(5-phospho-beta-D-ribosyl)-5'-AMP + H2O = 1-(5-phospho-beta-D-ribosyl)-5-[(5-phospho-beta-D-ribosylamino)methylideneamino]imidazole-4-carboxamide. Its pathway is amino-acid biosynthesis; L-histidine biosynthesis; L-histidine from 5-phospho-alpha-D-ribose 1-diphosphate: step 3/9. Its function is as follows. Catalyzes the hydrolysis of the adenine ring of phosphoribosyl-AMP. In Clostridium botulinum (strain ATCC 19397 / Type A), this protein is Phosphoribosyl-AMP cyclohydrolase.